Here is a 687-residue protein sequence, read N- to C-terminus: Polyphosphate kinase (687 aa).

ATP is bound at residue asparagine 45. Mg(2+)-binding residues include arginine 375 and arginine 405. Histidine 435 serves as the catalytic Phosphohistidine intermediate. Positions 472, 568, and 596 each coordinate ATP.

This sequence belongs to the polyphosphate kinase 1 (PPK1) family. Mg(2+) serves as cofactor. Post-translationally, an intermediate of this reaction is the autophosphorylated ppk in which a phosphate is covalently linked to a histidine residue through a N-P bond.

The enzyme catalyses [phosphate](n) + ATP = [phosphate](n+1) + ADP. In terms of biological role, catalyzes the reversible transfer of the terminal phosphate of ATP to form a long-chain polyphosphate (polyP). In Burkholderia ambifaria (strain MC40-6), this protein is Polyphosphate kinase.